The chain runs to 944 residues: Lactoferrin-binding protein A (944 aa).

Residues 1-27 (MNKKHGFSLTLTALAIAAAFPSYAANP) form the signal peptide. The TBDR plug domain maps to 52–178 (RRSKEATGLG…LGGAVAFRTK (127 aa)). The region spanning 189-944 (SWGIQAKTAY…NFSLALEMKF (756 aa)) is the TBDR beta-barrel domain. The short motif at 927 to 944 (GRYAAPGRNFSLALEMKF) is the TonB C-terminal box element.

The protein belongs to the TonB-dependent receptor family.

It is found in the cell outer membrane. Unknown. May be an iron-siderophore receptor. The sequence is that of Lactoferrin-binding protein A (lbpA) from Neisseria meningitidis serogroup A / serotype 4A (strain DSM 15465 / Z2491).